The sequence spans 769 residues: MAASAGCYYGVLGCALSLLLLPPLSRCAARTDSPLPEELPLILGFRLERSDRHAALSPDGELEVVEGSRLELRVYGLHLREDSGHILAFTEYSPGSQDNRSCLEDSRDLVLTRLNVSDDGFGAAGAAIVRLDVLPLRKSQSSRVYVLCTSRGPGLPWKLHTGPDGRLRVLEEEKPLLPIWLQACIIAVLLTLSGIFSGLNLGLMALDPMELRVVQRCGTEKEKRYASKIEPVRRKGNYLLCSLLLGNVLVNTTLTALLDELIGSGLAAVLASTTGIVVLGEIVPQALCSRHGLAVGANTLWLTRIFMLLTFPVAYPVSRLLDCALGQEIGTVYNREKLLEMLKVTEPYSGIVREEMNIIQGALELRTKTVEDVMTKVEDCFMLPSDAVLDFNTMSSIMESGYTRIPVYENERSNIVDILYVKDLAFVDPDDCTPLSTITRFYSHPLHFVFSDTKLDAVLEEFKKGKSHLAIVQKVNSEGEGDPFYEVMGLVTLEDVIEEIIKSEILDESDLYTDNRSKKRVKRRQDRKDFSVFKDADNELRVKISPQLLLAAHRFLSTEVPLFAPALVSEKTLLRLLKYPDVVQELHFNEDDKKASENFLYQRSKIADYFILILQGKVEVEAGKENMKFESGAFSYYGVMAINTPSAAELRSPSHMSSLNRSISLSCHERSDSISSTISGSNTQLSAQAQYMADFSVRALGDLQFVKITREQYQGALMSSRLDSSPQSPEGGTRKPDSTLSERSEVLEDETTSLLNQRNSQHSLQHNAV.

Residues 1–175 (MAASAGCYYG…RLRVLEEEKP (175 aa)) lie on the Extracellular side of the membrane. 2 N-linked (GlcNAc...) asparagine glycosylation sites follow: Asn-99 and Asn-115. The CNNM transmembrane domain occupies 175–355 (PLLPIWLQAC…EPYSGIVREE (181 aa)). Residues 176–196 (LLPIWLQACIIAVLLTLSGIF) form a helical membrane-spanning segment. The Cytoplasmic segment spans residues 197 to 237 (SGLNLGLMALDPMELRVVQRCGTEKEKRYASKIEPVRRKGN). The segment at residues 238 to 258 (YLLCSLLLGNVLVNTTLTALL) is an intramembrane region (helical). The Cytoplasmic segment spans residues 259–261 (DEL). The helical transmembrane segment at 262-282 (IGSGLAAVLASTTGIVVLGEI) threads the bilayer. Residues 283-292 (VPQALCSRHG) are Extracellular-facing. The chain crosses the membrane as a helical span at residues 293 to 313 (LAVGANTLWLTRIFMLLTFPV). The Cytoplasmic portion of the chain corresponds to 314–769 (AYPVSRLLDC…SQHSLQHNAV (456 aa)). CBS domains follow at residues 374–435 (MTKV…CTPL) and 442–508 (YSHP…ILDE). A disordered region spans residues 717–769 (LMSSRLDSSPQSPEGGTRKPDSTLSERSEVLEDETTSLLNQRNSQHSLQHNAV). Positions 721–730 (RLDSSPQSPE) are enriched in polar residues. Positions 732–746 (GTRKPDSTLSERSEV) are enriched in basic and acidic residues. Over residues 752–769 (TSLLNQRNSQHSLQHNAV) the composition is skewed to polar residues.

It belongs to the ACDP family.

Its subcellular location is the cell membrane. Its function is as follows. Probable metal transporter. This Xenopus tropicalis (Western clawed frog) protein is Metal transporter CNNM4 (cnnm4).